A 260-amino-acid chain; its full sequence is Ribose-5-phosphate isomerase (260 aa).

The protein belongs to the ribose 5-phosphate isomerase family.

It is found in the cytoplasm. The catalysed reaction is aldehydo-D-ribose 5-phosphate = D-ribulose 5-phosphate. It participates in carbohydrate degradation; pentose phosphate pathway; D-ribose 5-phosphate from D-ribulose 5-phosphate (non-oxidative stage): step 1/1. The chain is Ribose-5-phosphate isomerase (RKI1) from Candida glabrata (strain ATCC 2001 / BCRC 20586 / JCM 3761 / NBRC 0622 / NRRL Y-65 / CBS 138) (Yeast).